The sequence spans 1046 residues: Toluene efflux pump membrane transporter TtgE (1046 aa).

Helical transmembrane passes span 10-30, 339-359, 370-390, 392-412, 440-460, 470-490, 542-562, 871-891, 895-915, 927-947, 973-993, and 1008-1028; these read IFAW…LTKM, SVVH…FLFL, LAVP…GISI, VLTM…AIVV, GALV…AFFG, FAVT…IFTP, LIFA…PKAF, APML…ALYE, VPMS…LATL, VGLM…IEFA, IIMT…ATGA, and GMIT…VVVV.

The protein belongs to the resistance-nodulation-cell division (RND) (TC 2.A.6) family.

It is found in the cell inner membrane. Its function is as follows. The inner membrane transporter component of an inducible organic solvent efflux pump. Involved in export of toluene and styrene but not of m-xylene, propylbenzene or ethylbenzene. Is not involved in antibiotic or AMP efflux. The protein is Toluene efflux pump membrane transporter TtgE (ttgE) of Pseudomonas putida (strain DOT-T1E).